The primary structure comprises 339 residues: Cathepsin B (339 aa).

Positions 1–17 (MWQLWASLCCLLALADA) are cleaved as a signal peptide. Residues 18 to 79 (RSRPSFHPLS…QRVMFTEDLK (62 aa)) constitute a propeptide, activation peptide. 6 disulfides stabilise this stretch: Cys-93-Cys-122, Cys-105-Cys-150, Cys-141-Cys-207, Cys-142-Cys-146, Cys-179-Cys-211, and Cys-187-Cys-198. Cys-108 is an active-site residue. Residue Asn-192 is glycosylated (N-linked (GlcNAc...) asparagine). Lys-220 carries the post-translational modification N6-acetyllysine. Residues His-278 and Asn-298 contribute to the active site. Positions 334-339 (QYWEKI) are excised as a propeptide.

This sequence belongs to the peptidase C1 family. In terms of assembly, dimer of a heavy chain and a light chain cross-linked by a disulfide bond. Interacts with SRPX2. Directly interacts with SHKBP1.

The protein resides in the lysosome. It is found in the melanosome. Its subcellular location is the secreted. The protein localises to the extracellular space. It localises to the apical cell membrane. The enzyme catalyses Hydrolysis of proteins with broad specificity for peptide bonds. Preferentially cleaves -Arg-Arg-|-Xaa bonds in small molecule substrates (thus differing from cathepsin L). In addition to being an endopeptidase, shows peptidyl-dipeptidase activity, liberating C-terminal dipeptides.. In terms of biological role, thiol protease which is believed to participate in intracellular degradation and turnover of proteins. Cleaves matrix extracellular phosphoglycoprotein MEPE. Involved in the solubilization of cross-linked TG/thyroglobulin in the thyroid follicle lumen. Has also been implicated in tumor invasion and metastasis. The chain is Cathepsin B (CTSB) from Pongo abelii (Sumatran orangutan).